The sequence spans 388 residues: 1-deoxy-D-xylulose 5-phosphate reductoisomerase (388 aa).

The NADPH site is built by Thr10, Gly11, Ser12, Ile13, Lys37, Asn38, and Asn123. A 1-deoxy-D-xylulose 5-phosphate-binding site is contributed by Lys124. Glu125 is an NADPH binding site. Asp149 contacts Mn(2+). Residues Ser150, Glu151, Ser175, and His198 each contribute to the 1-deoxy-D-xylulose 5-phosphate site. Glu151 serves as a coordination point for Mn(2+). NADPH is bound at residue Gly204. 1-deoxy-D-xylulose 5-phosphate is bound by residues Ser211, Asn216, Lys217, and Glu220. Glu220 contributes to the Mn(2+) binding site.

This sequence belongs to the DXR family. It depends on Mg(2+) as a cofactor. Mn(2+) is required as a cofactor.

The enzyme catalyses 2-C-methyl-D-erythritol 4-phosphate + NADP(+) = 1-deoxy-D-xylulose 5-phosphate + NADPH + H(+). It participates in isoprenoid biosynthesis; isopentenyl diphosphate biosynthesis via DXP pathway; isopentenyl diphosphate from 1-deoxy-D-xylulose 5-phosphate: step 1/6. Functionally, catalyzes the NADPH-dependent rearrangement and reduction of 1-deoxy-D-xylulose-5-phosphate (DXP) to 2-C-methyl-D-erythritol 4-phosphate (MEP). In Pelagibacter ubique (strain HTCC1062), this protein is 1-deoxy-D-xylulose 5-phosphate reductoisomerase.